The primary structure comprises 60 residues: Ferredoxin (60 aa).

4Fe-4S ferredoxin-type domains lie at 2 to 30 (VTID…EIQG) and 31 to 60 (DKVV…TVKE). [4Fe-4S] cluster-binding residues include Cys-9, Cys-14, Cys-17, Cys-21, Cys-41, Cys-44, Cys-47, and Cys-51.

The cofactor is [4Fe-4S] cluster.

Ferredoxins are iron-sulfur proteins that transfer electrons probably in the CO-dehydrogenase complex. This Methanothermococcus thermolithotrophicus (Methanococcus thermolithotrophicus) protein is Ferredoxin.